We begin with the raw amino-acid sequence, 308 residues long: tRNA pseudouridine synthase B (308 aa).

The Nucleophile role is filled by D49.

It belongs to the pseudouridine synthase TruB family. Type 1 subfamily.

It catalyses the reaction uridine(55) in tRNA = pseudouridine(55) in tRNA. Functionally, responsible for synthesis of pseudouridine from uracil-55 in the psi GC loop of transfer RNAs. The chain is tRNA pseudouridine synthase B from Corynebacterium jeikeium (strain K411).